Consider the following 531-residue polypeptide: Type 2 DNA topoisomerase 6 subunit B (531 aa).

ATP-binding positions include asparagine 42, aspartate 76, 97-98, 106-113, and lysine 427; these read SK and GMYGLGVK.

Belongs to the TOP6B family. Homodimer. Heterotetramer of two Top6A and two Top6B chains.

The enzyme catalyses ATP-dependent breakage, passage and rejoining of double-stranded DNA.. Functionally, relaxes both positive and negative superturns and exhibits a strong decatenase activity. This chain is Type 2 DNA topoisomerase 6 subunit B, found in Metallosphaera sedula (strain ATCC 51363 / DSM 5348 / JCM 9185 / NBRC 15509 / TH2).